Reading from the N-terminus, the 1124-residue chain is Putative DNA mismatch repair protein mutS homolog L359 (1124 aa).

Residue 779 to 786 coordinates ATP; sequence SNNWAGKS.

It belongs to the DNA mismatch repair MutS family.

In terms of biological role, may be involved in DNA-mismatch repair. The chain is Putative DNA mismatch repair protein mutS homolog L359 from Acanthamoeba polyphaga (Amoeba).